The following is a 345-amino-acid chain: Probable 3'(2'),5'-bisphosphate nucleotidase 4 (345 aa).

Catalysis depends on Asp-46, which acts as the Proton acceptor. Mg(2+)-binding residues include Glu-71, Asp-134, Val-136, and Asp-137. Thr-139 (proton acceptor) is an active-site residue. Adenosine 3',5'-bisphosphate-binding residues include Thr-139, Ser-247, Lys-250, and Arg-264. AMP contacts are provided by Ser-247, Lys-250, and Arg-264.

Belongs to the inositol monophosphatase superfamily. The cofactor is Mg(2+).

The catalysed reaction is 3'-phosphoadenylyl sulfate + H2O = adenosine 5'-phosphosulfate + phosphate. The enzyme catalyses adenosine 3',5'-bisphosphate + H2O = AMP + phosphate. It carries out the reaction adenosine 2',5'-bisphosphate + H2O = AMP + phosphate. It catalyses the reaction 1D-myo-inositol 1,4-bisphosphate + H2O = 1D-myo-inositol 4-phosphate + phosphate. The catalysed reaction is 1D-myo-inositol 1,3,4-trisphosphate + H2O = 1D-myo-inositol 3,4-bisphosphate + phosphate. It functions in the pathway signal transduction; phosphatidylinositol signaling pathway. Its function is as follows. Phosphatase that converts adenosine 3'-phosphate 5'-phosphosulfate (PAPS) to adenosine 5'-phosphosulfate (APS) and 3'(2')-phosphoadenosine 5'-phosphate (PAP) to AMP. Is also able to hydrolyze inositol 1,4-bisphosphate and inositol 1,3,4-trisphosphate. The chain is Probable 3'(2'),5'-bisphosphate nucleotidase 4 (SAL4) from Arabidopsis thaliana (Mouse-ear cress).